The following is a 135-amino-acid chain: Ribosome-binding factor A (135 aa).

This sequence belongs to the RbfA family. As to quaternary structure, monomer. Binds 30S ribosomal subunits, but not 50S ribosomal subunits or 70S ribosomes.

It is found in the cytoplasm. One of several proteins that assist in the late maturation steps of the functional core of the 30S ribosomal subunit. Associates with free 30S ribosomal subunits (but not with 30S subunits that are part of 70S ribosomes or polysomes). Required for efficient processing of 16S rRNA. May interact with the 5'-terminal helix region of 16S rRNA. This Aliivibrio salmonicida (strain LFI1238) (Vibrio salmonicida (strain LFI1238)) protein is Ribosome-binding factor A.